The chain runs to 75 residues: Small ribosomal subunit protein bS18c (75 aa).

Over residues 1–12 (MNKSKRSFRRRL) the composition is skewed to basic residues. Residues 1 to 21 (MNKSKRSFRRRLPPIGSRDQI) form a disordered region.

Belongs to the bacterial ribosomal protein bS18 family. As to quaternary structure, part of the 30S ribosomal subunit.

The protein resides in the plastid. The protein localises to the chloroplast. The chain is Small ribosomal subunit protein bS18c from Cycas taitungensis (Prince sago).